Reading from the N-terminus, the 338-residue chain is uncharacterized protein (338 aa).

A signal peptide spans 1 to 29 (MIKQLYKNITICTLALSTTFTVLPATSYA).

Belongs to the aerolysin family.

This is an uncharacterized protein from Staphylococcus aureus (strain MSSA476).